Here is a 280-residue protein sequence, read N- to C-terminus: Thymidylate synthase (280 aa).

A dUMP-binding site is contributed by arginine 21. Histidine 51 lines the (6R)-5,10-methylene-5,6,7,8-tetrahydrofolate pocket. 142-143 (RR) is a binding site for dUMP. Residue cysteine 162 is the Nucleophile of the active site. DUMP is bound by residues 182–185 (RSAD), asparagine 193, and 223–225 (HLY). (6R)-5,10-methylene-5,6,7,8-tetrahydrofolate is bound at residue aspartate 185. Alanine 279 lines the (6R)-5,10-methylene-5,6,7,8-tetrahydrofolate pocket.

It belongs to the thymidylate synthase family. Bacterial-type ThyA subfamily. As to quaternary structure, homodimer.

It is found in the cytoplasm. It catalyses the reaction dUMP + (6R)-5,10-methylene-5,6,7,8-tetrahydrofolate = 7,8-dihydrofolate + dTMP. It functions in the pathway pyrimidine metabolism; dTTP biosynthesis. Its function is as follows. Catalyzes the reductive methylation of 2'-deoxyuridine-5'-monophosphate (dUMP) to 2'-deoxythymidine-5'-monophosphate (dTMP) while utilizing 5,10-methylenetetrahydrofolate (mTHF) as the methyl donor and reductant in the reaction, yielding dihydrofolate (DHF) as a by-product. This enzymatic reaction provides an intracellular de novo source of dTMP, an essential precursor for DNA biosynthesis. The polypeptide is Thymidylate synthase (Acinetobacter baylyi (strain ATCC 33305 / BD413 / ADP1)).